A 209-amino-acid chain; its full sequence is uncharacterized protein (209 aa).

3 helical membrane passes run 26–48 (LRYF…GLAV), 147–169 (AYLV…PFLM), and 179–196 (IVAA…VYLL).

It is found in the cell membrane. This is an uncharacterized protein from Archaeoglobus fulgidus (strain ATCC 49558 / DSM 4304 / JCM 9628 / NBRC 100126 / VC-16).